Reading from the N-terminus, the 188-residue chain is Elongation factor P (188 aa).

The protein belongs to the elongation factor P family.

Its subcellular location is the cytoplasm. The protein operates within protein biosynthesis; polypeptide chain elongation. In terms of biological role, involved in peptide bond synthesis. Stimulates efficient translation and peptide-bond synthesis on native or reconstituted 70S ribosomes in vitro. Probably functions indirectly by altering the affinity of the ribosome for aminoacyl-tRNA, thus increasing their reactivity as acceptors for peptidyl transferase. The polypeptide is Elongation factor P (Ureaplasma urealyticum serovar 10 (strain ATCC 33699 / Western)).